We begin with the raw amino-acid sequence, 359 residues long: 5-amino-6-(D-ribitylamino)uracil--L-tyrosine 4-hydroxyphenyl transferase (359 aa).

The Radical SAM core domain maps to 45 to 282; it reads VTYVVNANIN…TYAISRIFFK (238 aa). Residues C59, C63, and C66 each contribute to the [4Fe-4S] cluster site.

It belongs to the radical SAM superfamily. CofH family. In terms of assembly, consists of two subunits, CofG and CofH. The cofactor is [4Fe-4S] cluster.

The catalysed reaction is 5-amino-6-(D-ribitylamino)uracil + L-tyrosine + S-adenosyl-L-methionine = 5-amino-5-(4-hydroxybenzyl)-6-(D-ribitylimino)-5,6-dihydrouracil + 2-iminoacetate + 5'-deoxyadenosine + L-methionine + H(+). It functions in the pathway cofactor biosynthesis; coenzyme F0 biosynthesis. Its function is as follows. Catalyzes the radical-mediated synthesis of 5-amino-5-(4-hydroxybenzyl)-6-(D-ribitylimino)-5,6-dihydrouracil from 5-amino-6-(D-ribitylamino)uracil and L-tyrosine. The chain is 5-amino-6-(D-ribitylamino)uracil--L-tyrosine 4-hydroxyphenyl transferase from Methanococcus maripaludis (strain C5 / ATCC BAA-1333).